The sequence spans 322 residues: Probable uridine nucleosidase 2 (322 aa).

Catalysis depends on residues aspartate 14 and histidine 246.

The protein belongs to the IUNH family. In terms of assembly, component of the NSH heterocomplex made of URH1/NSH1 and URH2/NSH2 which exhibits strong xanthosine nucleosidase activity. Interacts with URH1. In terms of tissue distribution, expressed in roots, seedlings and flowers.

It localises to the cytoplasm. Its subcellular location is the cytosol. The catalysed reaction is uridine + H2O = D-ribose + uracil. It catalyses the reaction inosine + H2O = hypoxanthine + D-ribose. It carries out the reaction xanthosine + H2O = D-ribose + xanthine. In terms of biological role, involved in pyrimidine breakdown, especially in response to dark stress. In the presence of URH1, exhibits efficient inosine and xanthosine hydrolytic activities. Support inosine breakdown especially during the late phase of senescence. The protein is Probable uridine nucleosidase 2 of Arabidopsis thaliana (Mouse-ear cress).